The sequence spans 488 residues: Glycogen synthase (488 aa).

K17 serves as a coordination point for ADP-alpha-D-glucose.

This sequence belongs to the glycosyltransferase 1 family. Bacterial/plant glycogen synthase subfamily.

It carries out the reaction [(1-&gt;4)-alpha-D-glucosyl](n) + ADP-alpha-D-glucose = [(1-&gt;4)-alpha-D-glucosyl](n+1) + ADP + H(+). It functions in the pathway glycan biosynthesis; glycogen biosynthesis. Its function is as follows. Synthesizes alpha-1,4-glucan chains using ADP-glucose. The chain is Glycogen synthase from Nitratidesulfovibrio vulgaris (strain DSM 19637 / Miyazaki F) (Desulfovibrio vulgaris).